Consider the following 449-residue polypeptide: Neuraminidase (449 aa).

Residues 1–6 are Intravirion-facing; the sequence is MNPNQK. A helical transmembrane segment spans residues 7–27; that stretch reads IITIGSICMVIGIVSLMLQIG. The segment at 11–33 is involved in apical transport and lipid raft association; the sequence is GSICMVIGIVSLMLQIGNIISIW. The Virion surface segment spans residues 28–449; it reads NIISIWVSHS…GAELPFTIDK (422 aa). Residues 36 to 70 are hypervariable stalk region; the sequence is HSIQTGNQHQAEPISNTNFLTEKAVASVTLAGNSS. N-linked (GlcNAc...) asparagine; by host glycosylation is present at Asn68. The head of neuraminidase stretch occupies residues 71–449; that stretch reads LCPISGWAVH…GAELPFTIDK (379 aa). Disulfide bonds link Cys72/Cys397, Cys104/Cys109, Cys164/Cys211, Cys213/Cys218, Cys259/Cys272, Cys261/Cys270, Cys298/Cys315, and Cys401/Cys426. Arg98 is a substrate binding site. The N-linked (GlcNAc...) asparagine; by host glycan is linked to Asn126. Asp131 acts as the Proton donor/acceptor in catalysis. Arg132 lines the substrate pocket. An N-linked (GlcNAc...) asparagine; by host glycan is attached at Asn215. Residue 257–258 coordinates substrate; the sequence is EE. Arg273 is a binding site for substrate. Asp274, Gly278, and Asp304 together coordinate Ca(2+). Arg348 serves as a coordination point for substrate. The Nucleophile role is filled by Tyr382.

This sequence belongs to the glycosyl hydrolase 34 family. As to quaternary structure, homotetramer. Ca(2+) serves as cofactor. In terms of processing, N-glycosylated.

Its subcellular location is the virion membrane. The protein resides in the host apical cell membrane. The catalysed reaction is Hydrolysis of alpha-(2-&gt;3)-, alpha-(2-&gt;6)-, alpha-(2-&gt;8)- glycosidic linkages of terminal sialic acid residues in oligosaccharides, glycoproteins, glycolipids, colominic acid and synthetic substrates.. Its activity is regulated as follows. Inhibited by the neuraminidase inhibitors zanamivir (Relenza) and oseltamivir (Tamiflu). These drugs interfere with the release of progeny virus from infected cells and are effective against all influenza strains. Resistance to neuraminidase inhibitors is quite rare. Its function is as follows. Catalyzes the removal of terminal sialic acid residues from viral and cellular glycoconjugates. Cleaves off the terminal sialic acids on the glycosylated HA during virus budding to facilitate virus release. Additionally helps virus spread through the circulation by further removing sialic acids from the cell surface. These cleavages prevent self-aggregation and ensure the efficient spread of the progeny virus from cell to cell. Otherwise, infection would be limited to one round of replication. Described as a receptor-destroying enzyme because it cleaves a terminal sialic acid from the cellular receptors. May facilitate viral invasion of the upper airways by cleaving the sialic acid moieties on the mucin of the airway epithelial cells. Likely to plays a role in the budding process through its association with lipid rafts during intracellular transport. May additionally display a raft-association independent effect on budding. Plays a role in the determination of host range restriction on replication and virulence. Sialidase activity in late endosome/lysosome traffic seems to enhance virus replication. The polypeptide is Neuraminidase (Aves (Cat)).